The primary structure comprises 359 residues: Guanine nucleotide-binding protein-like alpha-11 subunit (359 aa).

Residue Gly2 is the site of N-myristoyl glycine attachment. One can recognise a G-alpha domain in the interval 29–359 (KLIKILMMGN…YVKKILEDTI (331 aa)). Residues 32-45 (KILMMGNENSAKST) form a G1 motif region. Residue Ser44 participates in Mg(2+) binding. The segment at 176–185 (DIIRCSKNNQ) is G2 motif. GTP is bound by residues 178–185 (IRCSKNNQ), 204–208 (DTGNQ), and 281–284 (NKKE). The G3 motif stretch occupies residues 200–209 (FVFVDTGNQK). Positions 277 to 284 (IVLFNKKE) are G4 motif. The tract at residues 337-342 (FNSSDT) is G5 motif.

It belongs to the G-alpha family.

This is Guanine nucleotide-binding protein-like alpha-11 subunit (gpaK) from Dictyostelium discoideum (Social amoeba).